We begin with the raw amino-acid sequence, 147 residues long: SsrA-binding protein (147 aa).

Residues 124–147 (KKHDKRQDIKDRDWARKQARQDFS) are disordered. Residues 128–147 (KRQDIKDRDWARKQARQDFS) show a composition bias toward basic and acidic residues.

The protein belongs to the SmpB family.

The protein resides in the cytoplasm. Required for rescue of stalled ribosomes mediated by trans-translation. Binds to transfer-messenger RNA (tmRNA), required for stable association of tmRNA with ribosomes. tmRNA and SmpB together mimic tRNA shape, replacing the anticodon stem-loop with SmpB. tmRNA is encoded by the ssrA gene; the 2 termini fold to resemble tRNA(Ala) and it encodes a 'tag peptide', a short internal open reading frame. During trans-translation Ala-aminoacylated tmRNA acts like a tRNA, entering the A-site of stalled ribosomes, displacing the stalled mRNA. The ribosome then switches to translate the ORF on the tmRNA; the nascent peptide is terminated with the 'tag peptide' encoded by the tmRNA and targeted for degradation. The ribosome is freed to recommence translation, which seems to be the essential function of trans-translation. This Neorickettsia sennetsu (strain ATCC VR-367 / Miyayama) (Ehrlichia sennetsu) protein is SsrA-binding protein.